Reading from the N-terminus, the 261-residue chain is Kallikrein 1-related peptidase b5 (261 aa).

The first 18 residues, 1 to 18 (MWFLILFLALSLGGIDAA), serve as a signal peptide directing secretion. A propeptide spans 19 to 24 (PPVQSR) (activation peptide). The Peptidase S1 domain occupies 25–258 (IFGGFNCEKN…FNSWIKDTIA (234 aa)). 5 disulfides stabilise this stretch: cysteine 31–cysteine 173, cysteine 50–cysteine 66, cysteine 152–cysteine 219, cysteine 184–cysteine 198, and cysteine 209–cysteine 234. Histidine 65 acts as the Charge relay system in catalysis. Residue asparagine 102 is glycosylated (N-linked (GlcNAc...) asparagine). Catalysis depends on aspartate 120, which acts as the Charge relay system. Serine 213 acts as the Charge relay system in catalysis.

Belongs to the peptidase S1 family. Kallikrein subfamily.

The catalysed reaction is Preferential cleavage of Arg-|-Xaa bonds in small molecule substrates. Highly selective action to release kallidin (lysyl-bradykinin) from kininogen involves hydrolysis of Met-|-Xaa or Leu-|-Xaa.. Glandular kallikreins cleave Met-Lys and Arg-Ser bonds in kininogen to release Lys-bradykinin. The protein is Kallikrein 1-related peptidase b5 (Klk1b5) of Mus musculus (Mouse).